A 61-amino-acid polypeptide reads, in one-letter code: Large ribosomal subunit protein uL30 (61 aa).

Belongs to the universal ribosomal protein uL30 family. As to quaternary structure, part of the 50S ribosomal subunit.

This chain is Large ribosomal subunit protein uL30, found in Thermobifida fusca (strain YX).